Reading from the N-terminus, the 553-residue chain is Putative transport protein YidE (553 aa).

5 helical membrane passes run 4 to 24 (IALT…IGNI), 28 to 48 (GVGF…HFVD), 65 to 85 (FGLI…FFAS), 95 to 115 (LFAV…HKIF), and 158 to 178 (MSYA…MWLM). 2 RCK C-terminal domains span residues 192–276 (KHES…VIGK) and 279–361 (DTSL…VVGN). 5 helical membrane passes run 371 to 391 (MLPV…PLFV), 403 to 425 (AGGP…LYWF), 437 to 457 (LGIV…FVNT), 464 to 484 (LSWI…VGLL), and 533 to 553 (LVMF…WGIG).

This sequence belongs to the AAE transporter (TC 2.A.81) family. YidE subfamily.

The protein resides in the cell membrane. This is Putative transport protein YidE from Salmonella arizonae (strain ATCC BAA-731 / CDC346-86 / RSK2980).